A 459-amino-acid chain; its full sequence is NADH oxidase (459 aa).

An FAD-binding site is contributed by Asn10. Residue His11 is the Proton acceptor of the active site. FAD is bound by residues Ala12, Asp34, Gln35, Cys44, Val81, Ala110, Ser113, Lys143, and Tyr172. Residue Cys44 is the Redox-active of the active site. Cys44 is subject to Cysteine sulfinic acid (-SO2H). NAD(+) contacts are provided by Ile173, Asp192, Tyr201, and Gly256. FAD is bound at residue Asp294. Ala310 serves as a coordination point for NAD(+). FAD contacts are provided by Leu311, Ala312, and Ser313. Residue Gly341 coordinates NAD(+). FAD is bound at residue Phe439.

Belongs to the class-III pyridine nucleotide-disulfide oxidoreductase family. It depends on FAD as a cofactor.

It localises to the secreted. Its subcellular location is the cell wall. It catalyses the reaction 2 NADH + O2 + 2 H(+) = 2 NAD(+) + 2 H2O. Its function is as follows. Catalyzes the four-electron reduction of molecular oxygen to water. Plays a role in redox balance maintenance. May be involved in mediating bacterial adhesion to host cells. May be considered a potential virulence factor. The sequence is that of NADH oxidase from Streptococcus pneumoniae (strain ATCC BAA-255 / R6).